Reading from the N-terminus, the 225-residue chain is Ribosome maturation factor RimP (225 aa).

Belongs to the RimP family.

Its subcellular location is the cytoplasm. Required for maturation of 30S ribosomal subunits. This is Ribosome maturation factor RimP from Rhodospirillum rubrum (strain ATCC 11170 / ATH 1.1.1 / DSM 467 / LMG 4362 / NCIMB 8255 / S1).